The following is a 605-amino-acid chain: Elongation factor 4 (605 aa).

Residues 9–192 (SRTRNFCIIA…AIIARIPSPK (184 aa)) enclose the tr-type G domain. Residues 21–26 (DHGKST) and 139–142 (NKID) each bind GTP.

The protein belongs to the TRAFAC class translation factor GTPase superfamily. Classic translation factor GTPase family. LepA subfamily.

It localises to the cell inner membrane. The enzyme catalyses GTP + H2O = GDP + phosphate + H(+). Functionally, required for accurate and efficient protein synthesis under certain stress conditions. May act as a fidelity factor of the translation reaction, by catalyzing a one-codon backward translocation of tRNAs on improperly translocated ribosomes. Back-translocation proceeds from a post-translocation (POST) complex to a pre-translocation (PRE) complex, thus giving elongation factor G a second chance to translocate the tRNAs correctly. Binds to ribosomes in a GTP-dependent manner. This Chlorobium limicola (strain DSM 245 / NBRC 103803 / 6330) protein is Elongation factor 4.